Here is a 649-residue protein sequence, read N- to C-terminus: Centrosomal protein of 63 kDa-A (649 aa).

Coiled-coil stretches lie at residues D19 to Q185 and E222 to S556. A Phosphoserine; by atm and atr modification is found at S560. Positions F612–F645 form a coiled coil.

This sequence belongs to the CEP63 family. In terms of processing, phosphorylation at Ser-560 by atm and atr promotes its delocalization from the centrosome and impairs its ability to promote centrosome dependent spindle assembly.

It is found in the cytoplasm. It localises to the cytoskeleton. The protein resides in the microtubule organizing center. Its subcellular location is the centrosome. The protein localises to the centriole. Its function is as follows. Required for normal spindle assembly. Plays a key role in mother-centriole-dependent centriole duplication. Plays a role in DNA damage response. Following DNA damage, such as double-strand breaks (DSBs), is removed from centrosomes; this leads to the inactivation of spindle assembly and delay in mitotic progression. The protein is Centrosomal protein of 63 kDa-A (cep63-a) of Xenopus laevis (African clawed frog).